Here is a 234-residue protein sequence, read N- to C-terminus: MKNMLLMSGSKYQNTDYLVHTLPWLQDFLADYQGKTVAFVPYAGVRQSYDEYELKVQKALAELNVAILSVHRAEKHAEIIEKADVIAIGGGNTFCLLKGMYEHHLLPLIREKVQSGTPYFGWSAGANVAGRSIMTTNDMPITYPPSFDALNLFPHQLNPHFISGKPAGHNGESREERLAEFLIVNPTANVYALPEGTALHIQGQQARVLGQHDVLLFSENMQLATLPVNSVFDY.

Residues S123, D138, and H160 each act as charge relay system in the active site.

The protein belongs to the peptidase S51 family.

The protein localises to the cytoplasm. It catalyses the reaction Dipeptidase E catalyzes the hydrolysis of dipeptides Asp-|-Xaa. It does not act on peptides with N-terminal Glu, Asn or Gln, nor does it cleave isoaspartyl peptides.. Its function is as follows. Hydrolyzes dipeptides containing N-terminal aspartate residues. May play a role in allowing the cell to use peptide aspartate to spare carbon otherwise required for the synthesis of the aspartate family of amino acids. The polypeptide is Peptidase E (Pasteurella multocida (strain Pm70)).